The chain runs to 301 residues: Glycine--tRNA ligase alpha subunit (301 aa).

It belongs to the class-II aminoacyl-tRNA synthetase family. Tetramer of two alpha and two beta subunits.

The protein resides in the cytoplasm. It carries out the reaction tRNA(Gly) + glycine + ATP = glycyl-tRNA(Gly) + AMP + diphosphate. This is Glycine--tRNA ligase alpha subunit from Pseudoalteromonas atlantica (strain T6c / ATCC BAA-1087).